Here is a 529-residue protein sequence, read N- to C-terminus: Low affinity inorganic phosphate transporter 5 (529 aa).

Topologically, residues 1-21 (MASNNLNVLNALDTAHTQWYH) are cytoplasmic. The chain crosses the membrane as a helical span at residues 22 to 42 (VTAVVIAGMGFFTDAYDLFCI). The Extracellular portion of the chain corresponds to 43–71 (STISKLLGRLYYYDPHTHAPGKLPHTVNN). Residues 72–92 (WVTGVALVGTLTGQLVFGWLG) form a helical membrane-spanning segment. Topologically, residues 93-99 (DKLGRKK) are cytoplasmic. The helical transmembrane segment at 100 to 120 (VYGLTLILMVICALSSGLSFG) threads the bilayer. The Extracellular segment spans residues 121–124 (YSRK). The chain crosses the membrane as a helical span at residues 125-145 (VVIGTLCFFRFWLGFGIGGDY). Topologically, residues 146–163 (PLSATIMSEYANKRTRGA) are cytoplasmic. A helical transmembrane segment spans residues 164–184 (FIAAVFAMQGVGIIFAGLVLM). The Extracellular portion of the chain corresponds to 185 to 211 (TVSKVFLMRYAGKAFSTDEVFSTEPEA). A helical membrane pass occupies residues 212-232 (DYVWRIVLMLGALPALLTYYW). At 233–291 (RMKMPETGRYTAIIEGNAKQAAIDMGKVLEIEIQAEGEKLAKFKSANDYSLLSNEFFQR) the chain is on the cytoplasmic side. The helical transmembrane segment at 292-312 (HGLHLIGTMSTWFLLDIAFYS) threads the bilayer. Over 313-344 (QNLTQKDIFPTMGLVSDAKSISALREMFETSR) the chain is Extracellular. Asn314 is a glycosylation site (N-linked (GlcNAc...) asparagine). The chain crosses the membrane as a helical span at residues 345 to 365 (AMFVIALLGTFPGYWFTVFFI). The Cytoplasmic segment spans residues 366-374 (EKIGRFKIQ). The chain crosses the membrane as a helical span at residues 375–395 (LMGFFMMSIFMAIIGVRYDYL). At 396–405 (KTKDHKWTFA) the chain is on the extracellular side. The chain crosses the membrane as a helical span at residues 406 to 426 (ALYGLTFFFANSGPNSTTFVL). The Cytoplasmic segment spans residues 427 to 472 (PAELFPTRVRSTCHALSAASGKAGAMVSAFGVQQYTQDGEVHKIKK). The chain crosses the membrane as a helical span at residues 473-493 (AMLFLAFTNMVGFCCTFLVTE). Residues 494–529 (TKGRSLEEISGEDENQNETKMKGRPVSGGHQDDGWD) lie on the Extracellular side of the membrane. The tract at residues 500-529 (EEISGEDENQNETKMKGRPVSGGHQDDGWD) is disordered. Residue Asn510 is glycosylated (N-linked (GlcNAc...) asparagine).

The protein belongs to the major facilitator superfamily. Phosphate:H(+) symporter (TC 2.A.1.9) family. In terms of tissue distribution, expressed at low levels in non-mycorrhized roots.

Its subcellular location is the cell membrane. It carries out the reaction phosphate(in) + H(+)(in) = phosphate(out) + H(+)(out). Functionally, low-affinity transporter for external inorganic phosphate (Pi) probably involved in the acquisition of phosphate released by arbuscular mycorrhizal (AM) fungi during AM symbiosis. This chain is Low affinity inorganic phosphate transporter 5, found in Petunia hybrida (Petunia).